We begin with the raw amino-acid sequence, 449 residues long: Signal recognition particle protein (449 aa).

GTP contacts are provided by residues 109–116 (GLQGGGKT), 191–195 (DTAGR), and 249–252 (SRID).

It belongs to the GTP-binding SRP family. SRP54 subfamily. Part of the signal recognition particle protein translocation system, which is composed of SRP and FtsY. SRP is a ribonucleoprotein composed of Ffh and a 4.5S RNA molecule.

Its subcellular location is the cytoplasm. The enzyme catalyses GTP + H2O = GDP + phosphate + H(+). Functionally, involved in targeting and insertion of nascent membrane proteins into the cytoplasmic membrane. Binds to the hydrophobic signal sequence of the ribosome-nascent chain (RNC) as it emerges from the ribosomes. The SRP-RNC complex is then targeted to the cytoplasmic membrane where it interacts with the SRP receptor FtsY. Interaction with FtsY leads to the transfer of the RNC complex to the Sec translocase for insertion into the membrane, the hydrolysis of GTP by both Ffh and FtsY, and the dissociation of the SRP-FtsY complex into the individual components. This Rickettsia prowazekii (strain Madrid E) protein is Signal recognition particle protein.